The primary structure comprises 129 residues: MAKTPVRARKRVKKQIADGVAHIHASFNNTIVTITDRQGNALAWATAGGSGFRGSRKSTPFAAQVAAERCAEAVKEFGLKNLEVMVKGPGPGRESTIRALNAAGFRITNITDVTPIPHNGCRPPKKRRV.

The protein belongs to the universal ribosomal protein uS11 family. Part of the 30S ribosomal subunit. Interacts with proteins S7 and S18. Binds to IF-3.

In terms of biological role, located on the platform of the 30S subunit, it bridges several disparate RNA helices of the 16S rRNA. Forms part of the Shine-Dalgarno cleft in the 70S ribosome. The sequence is that of Small ribosomal subunit protein uS11 from Haemophilus ducreyi (strain 35000HP / ATCC 700724).